A 129-amino-acid polypeptide reads, in one-letter code: Serum amyloid A protein (129 aa).

Residues methionine 1 to glycine 18 form the signal peptide. Pyrrolidone carboxylic acid is present on glutamine 19. Positions glycine 92 to tyrosine 129 are disordered. Residues arginine 112–tyrosine 129 constitute a propeptide, often cleaved during amyloidogenesis.

This sequence belongs to the SAA family. Post-translationally, this protein is the precursor of amyloid protein A, which is formed by the removal of residues from the C-terminal end. As to expression, expressed by the liver; secreted in plasma.

The protein resides in the secreted. Functionally, major acute phase reactant. Apolipoprotein of the HDL complex. In Canis lupus familiaris (Dog), this protein is Serum amyloid A protein (SAA1).